Reading from the N-terminus, the 386-residue chain is S-(hydroxymethyl)glutathione dehydrogenase (386 aa).

Ser-2 carries the post-translational modification N-acetylserine. A Zn(2+)-binding site is contributed by Cys-49. An NAD(+)-binding site is contributed by His-50. Zn(2+) contacts are provided by His-71, Glu-72, Cys-101, Cys-104, Cys-107, Cys-115, and Cys-179. NAD(+) is bound by residues 204 to 209, Asp-228, 300 to 302, and 325 to 327; these read GCGTVG, IGV, and SAF.

It belongs to the zinc-containing alcohol dehydrogenase family. Class-III subfamily. The cofactor is Zn(2+).

The protein resides in the cytoplasm. Its subcellular location is the mitochondrion. It carries out the reaction a primary alcohol + NAD(+) = an aldehyde + NADH + H(+). It catalyses the reaction a secondary alcohol + NAD(+) = a ketone + NADH + H(+). The enzyme catalyses S-(hydroxymethyl)glutathione + NADP(+) = S-formylglutathione + NADPH + H(+). The catalysed reaction is S-(hydroxymethyl)glutathione + NAD(+) = S-formylglutathione + NADH + H(+). It carries out the reaction S-nitrosoglutathione + NADH + H(+) = S-(hydroxysulfenamide)glutathione + NAD(+). In terms of biological role, oxidizes long-chain alcohols and, in the presence of glutathione, is able to oxidize formaldehyde. Is responsible for yeast resistance to formaldehyde. Also acts as a S-nitroso-glutathione reductase by catalyzing the NADH-dependent reduction of S-nitrosoglutathione, thereby regulating protein S-nitrosylation. This chain is S-(hydroxymethyl)glutathione dehydrogenase (SFA1), found in Saccharomyces cerevisiae (strain ATCC 204508 / S288c) (Baker's yeast).